The chain runs to 552 residues: Formate--tetrahydrofolate ligase (552 aa).

An ATP-binding site is contributed by 62 to 69 (TPAGEGKS).

This sequence belongs to the formate--tetrahydrofolate ligase family.

The catalysed reaction is (6S)-5,6,7,8-tetrahydrofolate + formate + ATP = (6R)-10-formyltetrahydrofolate + ADP + phosphate. It functions in the pathway one-carbon metabolism; tetrahydrofolate interconversion. The sequence is that of Formate--tetrahydrofolate ligase from Ligilactobacillus salivarius (strain UCC118) (Lactobacillus salivarius).